Consider the following 470-residue polypeptide: MKSKIYFKFTTEKDEIDGVYKDGLNIYKTSNTITNISSDNKKEGITYLDPSKSARCLYRDAKYLRIVRLHKDTVSVKQDYLNDNGRFWADKLYLGKRFELSDPFTIMYMIKMGYNVRERDDYMLEWACAGNFTEVARYLLKIGANPGTNKYACFESAVRNGNYDMVKLLLENIPGSDKFYYKMLEVFKNKSRYCGPEISKLFFNYVRDCDIDYIIRHDTQKLYVLEDTEFVKSLVGRGLGIGKFIDRTEPKFDKYYLECVVRGFLDTMKYFDTIDTTIVTRNQQQLIEKAVLSKNLDVFKYLEQNIDVGPMIDDLILKCMKIDLFVFVKYMIEKYNVINVLDTNKLIENISLCCNMEMIEYMTNLTGISIPETQGLLTNACQYNNSELVKYLLEKGANVNEFNGKPLREAIKNNNKDIIKNLMDYSPDISLDNYAAIRESFATFPEIAKKLAVGISIEKLHEIIFDQKIS.

ANK repeat units follow at residues Arg-119–Thr-148, Asn-149–Lys-178, Glu-372–Glu-401, and Asn-403–Leu-431.

The polypeptide is Putative ankyrin repeat protein L279 (Acanthamoeba polyphaga (Amoeba)).